The sequence spans 327 residues: tRNA dimethylallyltransferase (327 aa).

An ATP-binding site is contributed by 14-21; sequence GPTASGKT. Substrate is bound at residue 16–21; sequence TASGKT. Interaction with substrate tRNA regions lie at residues 39–42 and 163–167; these read DSAL and QRIQR.

This sequence belongs to the IPP transferase family. As to quaternary structure, monomer. Requires Mg(2+) as cofactor.

It carries out the reaction adenosine(37) in tRNA + dimethylallyl diphosphate = N(6)-dimethylallyladenosine(37) in tRNA + diphosphate. Catalyzes the transfer of a dimethylallyl group onto the adenine at position 37 in tRNAs that read codons beginning with uridine, leading to the formation of N6-(dimethylallyl)adenosine (i(6)A). The polypeptide is tRNA dimethylallyltransferase (Xanthomonas oryzae pv. oryzae (strain PXO99A)).